A 329-amino-acid polypeptide reads, in one-letter code: Octaprenyl diphosphate synthase (329 aa).

Lys-51, Arg-54, and His-83 together coordinate isopentenyl diphosphate. Mg(2+)-binding residues include Asp-90 and Asp-94. Arg-99 contacts an all-trans-polyprenyl diphosphate. An isopentenyl diphosphate-binding site is contributed by Arg-100. An all-trans-polyprenyl diphosphate-binding residues include Lys-176, Thr-177, and Gln-214.

This sequence belongs to the FPP/GGPP synthase family. Mg(2+) serves as cofactor.

The catalysed reaction is 5 isopentenyl diphosphate + (2E,6E)-farnesyl diphosphate = all-trans-octaprenyl diphosphate + 5 diphosphate. Its function is as follows. Supplies octaprenyl diphosphate, the precursor for the side chain of the isoprenoid quinones ubiquinone and menaquinone. In Haemophilus influenzae (strain ATCC 51907 / DSM 11121 / KW20 / Rd), this protein is Octaprenyl diphosphate synthase (ispB).